The sequence spans 338 residues: Tripartite motif-containing protein 44 (338 aa).

Disordered stretches follow at residues Met-1–Glu-25 and Ala-72–Pro-162. A compositionally biased stretch (acidic residues) spans Glu-95–Pro-162. A coiled-coil region spans residues Glu-109–Glu-153. The B box-type zinc finger occupies Val-171 to Leu-212. Residues Cys-176, His-179, Cys-198, and His-204 each contribute to the Zn(2+) site. A coiled-coil region spans residues Gln-257–Glu-322. The segment at Met-307 to Asp-338 is disordered. Acidic residues predominate over residues Gly-327–Asp-338.

In terms of assembly, interacts (via coiled coil) with TRIM17 (via coiled coil).

In terms of biological role, may play a role in the process of differentiation and maturation of neuronal cells. May regulate the activity of TRIM17. Is a negative regulator of PAX6 expression. This Bos taurus (Bovine) protein is Tripartite motif-containing protein 44 (TRIM44).